The sequence spans 268 residues: Adenosylcobinamide-GDP ribazoletransferase (268 aa).

6 consecutive transmembrane segments (helical) span residues 54 to 74, 80 to 100, 124 to 144, 150 to 170, 202 to 222, and 243 to 263; these read IAGL…GVLW, AVVL…DGLS, IGVM…AFLA, WLTA…YGIV, ALAL…VWMV, and GALC…SAPM.

The protein belongs to the CobS family. Mg(2+) serves as cofactor.

The protein resides in the cell membrane. The catalysed reaction is alpha-ribazole + adenosylcob(III)inamide-GDP = adenosylcob(III)alamin + GMP + H(+). It carries out the reaction alpha-ribazole 5'-phosphate + adenosylcob(III)inamide-GDP = adenosylcob(III)alamin 5'-phosphate + GMP + H(+). The protein operates within cofactor biosynthesis; adenosylcobalamin biosynthesis; adenosylcobalamin from cob(II)yrinate a,c-diamide: step 7/7. Joins adenosylcobinamide-GDP and alpha-ribazole to generate adenosylcobalamin (Ado-cobalamin). Also synthesizes adenosylcobalamin 5'-phosphate from adenosylcobinamide-GDP and alpha-ribazole 5'-phosphate. This chain is Adenosylcobinamide-GDP ribazoletransferase, found in Roseiflexus sp. (strain RS-1).